Consider the following 362-residue polypeptide: 3-dehydroquinate synthase (362 aa).

Residues 72 to 77 (DGEQYK), 106 to 110 (GVVGD), 130 to 131 (TT), K143, K152, and 170 to 173 (CLKT) each bind NAD(+). Residues E185, H248, and H265 each coordinate Zn(2+).

Belongs to the sugar phosphate cyclases superfamily. Dehydroquinate synthase family. The cofactor is Co(2+). Requires Zn(2+) as cofactor. NAD(+) is required as a cofactor.

It is found in the cytoplasm. The enzyme catalyses 7-phospho-2-dehydro-3-deoxy-D-arabino-heptonate = 3-dehydroquinate + phosphate. The protein operates within metabolic intermediate biosynthesis; chorismate biosynthesis; chorismate from D-erythrose 4-phosphate and phosphoenolpyruvate: step 2/7. Functionally, catalyzes the conversion of 3-deoxy-D-arabino-heptulosonate 7-phosphate (DAHP) to dehydroquinate (DHQ). The protein is 3-dehydroquinate synthase of Aliivibrio salmonicida (strain LFI1238) (Vibrio salmonicida (strain LFI1238)).